The primary structure comprises 55 residues: Large ribosomal subunit protein bL33 (55 aa).

Belongs to the bacterial ribosomal protein bL33 family.

This is Large ribosomal subunit protein bL33 from Sodalis glossinidius (strain morsitans).